The following is a 315-amino-acid chain: Eukaryotic translation initiation factor 2 subunit 1 (315 aa).

The S1 motif domain occupies 17–88; that stretch reads EDVVMVNVRS…EKGYIDLSKR (72 aa). Serine 49 is subject to Phosphoserine; by HRI. Serine 52 is modified (phosphoserine). At lysine 141 the chain carries N6-acetyllysine. Residue serine 158 is modified to Phosphoserine. Phosphothreonine occurs at positions 279 and 281. The disordered stretch occupies residues 293 to 315; sequence LERENAEVDGDDDAEEMEAKAED. Residues 299-308 show a composition bias toward acidic residues; sequence EVDGDDDAEE.

This sequence belongs to the eIF-2-alpha family. Eukaryotic translation initiation factor 2 eIF2 is a heterotrimeric complex composed of an alpha (EIF2S1), a beta (EIF2S2) and a gamma (EIF2S3) chain. eIF2 is member of the 43S pre-initiation complex (43S PIC). eIF2 forms a complex with at least CELF1/CUGBP1, CALR, CALR3, EIF2S1, EIF2S2, HSP90B1 and HSPA5. Interaction with METAP2 protects EIF2S1 from inhibitory phosphorylation. Interacts with ABCF1. Associates with ribosomes. Interacts with DDX3X in an RNA-independent manner. In terms of processing, phosphorylation at Ser-49 and Ser-52 stabilizes the eIF-2/GDP/eIF2B complex and prevents GDP/GTP exchange reaction, thus impairing the recycling of eIF-2 between successive rounds of initiation and leading to global inhibition of translation, while concomitantly initiating the preferential translation of integrated stress response (ISR)-specific mRNAs. Substrate for at least 4 kinases: EIF2AK1/HRI, EIF2AK2/PKR, EIF2AK3/PERK and EIF2AK4/GCN2. Phosphorylation on Ser-52 by the EIF2AK4/GCN2 protein kinase occurs in response to amino acid starvation and UV irradiation. Phosphorylation at Ser-52 by the EIF2AK3/PERK protein kinase occurs in response to the unfolded protein response. Phosphorylation at Ser-52 by EIF2AK1/HRI in response to mitochondrial damage promotes relocalization to the mitochondrial surface.

Its subcellular location is the cytoplasm. It is found in the stress granule. The protein localises to the cytosol. The protein resides in the mitochondrion. Activity is regulated by phosphorylation at Ser-49 and Ser-52, which stabilizes the eIF2/GDP/eIF2B complex and prevents the eIF2B-mediated exchange of GDP for GTP, thereby preventing the formation of the 43S pre-initiation complex (43S PIC). This results in the global attenuation of 5' cap-dependent protein synthesis and concomitant translation of ISR-specific mRNAs that contain a short upstream open reading frame (uORF) in their 5' UTR, such as ATF4, ATF5, DDIT3/CHOP and PPP1R15A/GADD34. Member of the eIF2 complex that functions in the early steps of protein synthesis by forming a ternary complex with GTP and initiator tRNA. This complex binds to a 40S ribosomal subunit, followed by mRNA binding to form a 43S pre-initiation complex. Junction of the 60S ribosomal subunit to form the 80S initiation complex is preceded by hydrolysis of the GTP bound to eIF2 and release of an eIF2-GDP binary complex. In order for eIF2 to recycle and catalyze another round of initiation, the GDP bound to eIF2 must exchange with GTP by way of a reaction catalyzed by eIF2B. EIF2S1/eIF2-alpha is a key component of the integrated stress response (ISR), required for adaptation to various stress: phosphorylation by metabolic-stress sensing protein kinases (EIF2AK1/HRI, EIF2AK2/PKR, EIF2AK3/PERK and EIF2AK4/GCN2) in response to stress converts EIF2S1/eIF2-alpha in a global protein synthesis inhibitor, leading to a attenuation of cap-dependent translation, while concomitantly initiating the preferential translation of ISR-specific mRNAs, such as the transcriptional activators ATF4 and QRICH1, and hence allowing ATF4- and QRICH1-mediated reprogramming. EIF2S1/eIF2-alpha also acts as an activator of mitophagy in response to mitochondrial damage: phosphorylation by EIF2AK1/HRI promotes relocalization to the mitochondrial surface, thereby triggering PRKN-independent mitophagy. This Pongo abelii (Sumatran orangutan) protein is Eukaryotic translation initiation factor 2 subunit 1 (EIF2S1).